A 283-amino-acid chain; its full sequence is DegV domain-containing protein lmo2514 (283 aa).

In terms of domain architecture, DegV spans 5-282; the sequence is IAVVTDSTTY…EGALGLTWSI (278 aa). Ser-63 and Ser-96 together coordinate hexadecanoate.

In terms of biological role, may bind long-chain fatty acids, such as palmitate, and may play a role in lipid transport or fatty acid metabolism. The sequence is that of DegV domain-containing protein lmo2514 from Listeria monocytogenes serovar 1/2a (strain ATCC BAA-679 / EGD-e).